The primary structure comprises 121 residues: MARIAGINIPPQQHAEIGLTAIFGIGRTRARKICEAANVPLSKKVKDLTDAELERIREHVGVFTVEGDLRREVQLSIKRLIDLGTYRGMRHKRGLPVRGQRTRTNARTRKGPRRAAASLKK.

The tract at residues 91–121 (HKRGLPVRGQRTRTNARTRKGPRRAAASLKK) is disordered.

Belongs to the universal ribosomal protein uS13 family. In terms of assembly, part of the 30S ribosomal subunit. Forms a loose heterodimer with protein S19. Forms two bridges to the 50S subunit in the 70S ribosome.

Its function is as follows. Located at the top of the head of the 30S subunit, it contacts several helices of the 16S rRNA. In the 70S ribosome it contacts the 23S rRNA (bridge B1a) and protein L5 of the 50S subunit (bridge B1b), connecting the 2 subunits; these bridges are implicated in subunit movement. Contacts the tRNAs in the A and P-sites. In Bordetella petrii (strain ATCC BAA-461 / DSM 12804 / CCUG 43448), this protein is Small ribosomal subunit protein uS13.